We begin with the raw amino-acid sequence, 513 residues long: Gluconokinase (513 aa).

ATP contacts are provided by residues Lys16, Thr261, Gly300, and 412–416; that span reads GFARS.

It belongs to the FGGY kinase family.

The enzyme catalyses D-gluconate + ATP = 6-phospho-D-gluconate + ADP + H(+). The protein operates within carbohydrate acid metabolism; D-gluconate degradation. Its activity is regulated as follows. Catabolite repression by gluconate. The polypeptide is Gluconokinase (gntK) (Bacillus subtilis (strain 168)).